A 65-amino-acid chain; its full sequence is Large ribosomal subunit protein bL33 (65 aa).

The tract at residues 20 to 40 (VPPSEKRSPGVSRYTTEKNRR) is disordered.

It belongs to the bacterial ribosomal protein bL33 family.

The protein is Large ribosomal subunit protein bL33 of Prochlorococcus marinus (strain MIT 9211).